The chain runs to 75 residues: Small ribosomal subunit protein bS18 (75 aa).

Belongs to the bacterial ribosomal protein bS18 family. In terms of assembly, part of the 30S ribosomal subunit. Forms a tight heterodimer with protein bS6.

In terms of biological role, binds as a heterodimer with protein bS6 to the central domain of the 16S rRNA, where it helps stabilize the platform of the 30S subunit. The polypeptide is Small ribosomal subunit protein bS18 (Klebsiella pneumoniae (strain 342)).